We begin with the raw amino-acid sequence, 131 residues long: D-ribose pyranase (131 aa).

His-20 functions as the Proton donor in the catalytic mechanism. Substrate contacts are provided by residues Asp-28, His-98, and 120-122 (YAN).

This sequence belongs to the RbsD / FucU family. RbsD subfamily. As to quaternary structure, homodecamer.

It localises to the cytoplasm. It catalyses the reaction beta-D-ribopyranose = beta-D-ribofuranose. The protein operates within carbohydrate metabolism; D-ribose degradation; D-ribose 5-phosphate from beta-D-ribopyranose: step 1/2. In terms of biological role, catalyzes the interconversion of beta-pyran and beta-furan forms of D-ribose. In Bacillus cereus (strain 03BB102), this protein is D-ribose pyranase.